A 208-amino-acid chain; its full sequence is MVSRRVQALLDQLRVQGIQDEQVLNALAAVPREKFVDEAFEQKAWDNIALPIGQGQTISQPYMVARMTELLELTPQSRVLEIGTGSGYQTAILAHLVQHVCSVERIKGLQWQARRRLKNLDLHNVSTRHGDGWQGWQARAPFDAIIVTAAPPEIPTALMTQLDEGGILVLPVGEEHQYLKRVRRRGGEFIIDTVEAVRFVPLVKGELA.

S59 is a catalytic residue.

This sequence belongs to the methyltransferase superfamily. L-isoaspartyl/D-aspartyl protein methyltransferase family.

It is found in the cytoplasm. The enzyme catalyses [protein]-L-isoaspartate + S-adenosyl-L-methionine = [protein]-L-isoaspartate alpha-methyl ester + S-adenosyl-L-homocysteine. Functionally, catalyzes the methyl esterification of L-isoaspartyl residues in peptides and proteins that result from spontaneous decomposition of normal L-aspartyl and L-asparaginyl residues. It plays a role in the repair and/or degradation of damaged proteins. The sequence is that of Protein-L-isoaspartate O-methyltransferase from Escherichia coli O7:K1 (strain IAI39 / ExPEC).